Here is a 202-residue protein sequence, read N- to C-terminus: Phospholipase A2 inhibitor gamma subunit A (202 aa).

Residues 1 to 19 (MKSLQIICLLFIFVARGSC) form the signal peptide. 8 disulfides stabilise this stretch: cysteine 22/cysteine 47, cysteine 25/cysteine 32, cysteine 40/cysteine 68, cysteine 74/cysteine 95, cysteine 96/cysteine 101, cysteine 119/cysteine 144, cysteine 137/cysteine 166, and cysteine 170/cysteine 192. An N-linked (GlcNAc...) asparagine glycan is attached at asparagine 177.

It belongs to the CNF-like-inhibitor family. Heterodimer of subunit A and subunit B. N-glycosylated. As to expression, expressed by the liver. Not expressed in esophagus, stomach, pancreas, spleen, gall bladder, small intestine, rectum, kidney, trachea, lung, testis and body fat.

The protein localises to the secreted. Functionally, inhibits the enzymatic activity of all phospholipase A2 (PA2) groups. This Elaphe quadrivirgata (Japanese four-lined ratsnake) protein is Phospholipase A2 inhibitor gamma subunit A.